Reading from the N-terminus, the 140-residue chain is uncharacterized protein (140 aa).

The 124-residue stretch at threonine 4 to glycine 127 folds into the VOC domain.

This is an uncharacterized protein from Pseudomonas aeruginosa (strain ATCC 15692 / DSM 22644 / CIP 104116 / JCM 14847 / LMG 12228 / 1C / PRS 101 / PAO1).